The chain runs to 50 residues: Putative protein HokG (50 aa).

The helical transmembrane segment at 5 to 25 (YALVAIIVLCCTVLGFTLMVG) threads the bilayer.

The protein belongs to the Hok/Gef family.

It localises to the cell inner membrane. Functionally, toxic component of a type I toxin-antitoxin (TA) system. When overexpressed kills cells within minutes; causes collapse of the transmembrane potential and arrest of respiration. Its toxic effect is probably neutralized by an antisense antitoxin Sok RNA. The protein is Putative protein HokG (hokG) of Escherichia coli O157:H7.